Here is a 340-residue protein sequence, read N- to C-terminus: UDP-3-O-(3-hydroxymyristoyl)glucosamine N-acyltransferase (340 aa).

The Proton acceptor role is filled by histidine 239.

The protein belongs to the transferase hexapeptide repeat family. LpxD subfamily. As to quaternary structure, homotrimer.

The enzyme catalyses a UDP-3-O-[(3R)-3-hydroxyacyl]-alpha-D-glucosamine + a (3R)-hydroxyacyl-[ACP] = a UDP-2-N,3-O-bis[(3R)-3-hydroxyacyl]-alpha-D-glucosamine + holo-[ACP] + H(+). It carries out the reaction UDP-3-O-[(3R)-3-hydroxytetradecanoyl]-alpha-D-glucosamine + (3R)-hydroxytetradecanoyl-[ACP] = UDP-2-N,3-O-bis[(3R)-3-hydroxytetradecanoyl]-alpha-D-glucosamine + holo-[ACP] + H(+). Its pathway is glycolipid biosynthesis; lipid IV(A) biosynthesis; lipid IV(A) from (3R)-3-hydroxytetradecanoyl-[acyl-carrier-protein] and UDP-N-acetyl-alpha-D-glucosamine: step 3/6. In terms of biological role, catalyzes the N-acylation of UDP-3-O-(hydroxytetradecanoyl)glucosamine using 3-hydroxytetradecanoyl-ACP as the acyl donor. Is involved in the biosynthesis of lipid A, a phosphorylated glycolipid that anchors the lipopolysaccharide to the outer membrane of the cell. This is UDP-3-O-(3-hydroxymyristoyl)glucosamine N-acyltransferase from Sodalis glossinidius (strain morsitans).